Reading from the N-terminus, the 282-residue chain is Elongation factor Ts (282 aa).

Positions T79–V82 are involved in Mg(2+) ion dislocation from EF-Tu.

The protein belongs to the EF-Ts family.

Its subcellular location is the cytoplasm. Associates with the EF-Tu.GDP complex and induces the exchange of GDP to GTP. It remains bound to the aminoacyl-tRNA.EF-Tu.GTP complex up to the GTP hydrolysis stage on the ribosome. In Shewanella woodyi (strain ATCC 51908 / MS32), this protein is Elongation factor Ts.